The chain runs to 97 residues: MSRPKKIGAEAALARLPTWAKAEGGRDAICKTFRFKDFNAAFGFMTRVAIRADQLDHHPEWFNVYNRVEVTLATHDADGVTELDMTLAGFMDEISGN.

It belongs to the pterin-4-alpha-carbinolamine dehydratase family.

The catalysed reaction is (4aS,6R)-4a-hydroxy-L-erythro-5,6,7,8-tetrahydrobiopterin = (6R)-L-erythro-6,7-dihydrobiopterin + H2O. In Phenylobacterium zucineum (strain HLK1), this protein is Putative pterin-4-alpha-carbinolamine dehydratase.